The following is a 70-amino-acid chain: MTSVKTIAMLAMLVIVAALIYMGYRTFTSMQSKLNELESRVNAPQLRPPVMSPIVPLNFIESEDLDKELD.

A helical transmembrane segment spans residues 4 to 24 (VKTIAMLAMLVIVAALIYMGY).

It localises to the host membrane. This is an uncharacterized protein from Dryophytes versicolor (chameleon treefrog).